Reading from the N-terminus, the 231-residue chain is Large ribosomal subunit protein uL1 (231 aa).

The protein belongs to the universal ribosomal protein uL1 family. Part of the 50S ribosomal subunit.

Its function is as follows. Binds directly to 23S rRNA. The L1 stalk is quite mobile in the ribosome, and is involved in E site tRNA release. Functionally, protein L1 is also a translational repressor protein, it controls the translation of the L11 operon by binding to its mRNA. This Carboxydothermus hydrogenoformans (strain ATCC BAA-161 / DSM 6008 / Z-2901) protein is Large ribosomal subunit protein uL1.